The sequence spans 1264 residues: uncharacterized protein (1264 aa).

The signal sequence occupies residues Met1–Gly18. A helical transmembrane segment spans residues Ser1215–Leu1235.

Its subcellular location is the host membrane. This is an uncharacterized protein from Ostreid herpesvirus 1 (isolate France) (OsHV-1).